Consider the following 359-residue polypeptide: MNSSIVLLPGDGIGPEIVEQARLVLVKVAERFGHTFDFSSHQIGGIAIDETGDPLPQPTIDACRNAAAILLGAVGGPKWDDPSAKTRPEAGLLKIRKELGLFANLRPIKLFDELADASPLRADIVKGTDILFFRELTGGIYFGESGTSGSGEEETAFQSMTYSVGEVKRIVRMAAQAARGRSNRLTSVDKANVLEPSRLWRRVAAEVMANEFPDVQYDVVLVDSMAMHLINRPSEFDVVVTGNMFGDILTDEASMLPGSLGMLPSASLGDGGPGLYEPIHGSAPDIAGKSVANPLATILAAAMMLRHSLGLTDEAEAIEKAVAGVITDGLRTPDLARGDQSKSVSTEEMGAAVVAKLAS.

Position 76–89 (76–89) interacts with NAD(+); that stretch reads GPKWDDPSAKTRPE. Residues R96, R106, R134, and D223 each contribute to the substrate site. D223, D247, and D251 together coordinate Mg(2+). 281–293 is an NAD(+) binding site; sequence GSAPDIAGKSVAN.

It belongs to the isocitrate and isopropylmalate dehydrogenases family. LeuB type 1 subfamily. Homodimer. The cofactor is Mg(2+). It depends on Mn(2+) as a cofactor.

The protein localises to the cytoplasm. The catalysed reaction is (2R,3S)-3-isopropylmalate + NAD(+) = 4-methyl-2-oxopentanoate + CO2 + NADH. The protein operates within amino-acid biosynthesis; L-leucine biosynthesis; L-leucine from 3-methyl-2-oxobutanoate: step 3/4. Its function is as follows. Catalyzes the oxidation of 3-carboxy-2-hydroxy-4-methylpentanoate (3-isopropylmalate) to 3-carboxy-4-methyl-2-oxopentanoate. The product decarboxylates to 4-methyl-2 oxopentanoate. This is 3-isopropylmalate dehydrogenase from Rhodopirellula baltica (strain DSM 10527 / NCIMB 13988 / SH1).